The following is a 399-amino-acid chain: Yellow-related salivary protein M10 (399 aa).

Residues 1–18 (MKFILSVLALASFQHVFC) form the signal peptide. N-linked (GlcNAc...) asparagine glycosylation is found at Asn29 and Asn83.

It belongs to the major royal jelly protein family. Salivary gland (at protein level).

It is found in the secreted. Probably modulates blood feeding of sand flies on vertebrate species by binding and sequestering different mediators involved in the host response. Functions as a chemoattractant for host neutrophils; likely acts through a G-protein-coupled receptor and effect is dependent on calcium influx and phosphatidylinositol 3-kinases (PI3K) activity. Its function is as follows. (Microbial infection) Probably enhances infection caused by Leishmania species in the host through augmentation of host neutrophil recruitment into the skin. The polypeptide is Yellow-related salivary protein M10 (Phlebotomus duboscqi (Sandfly)).